A 214-amino-acid polypeptide reads, in one-letter code: External core antigen (214 aa).

Positions 1 to 19 (MQLFHLCLIISCTCPTVQA) are cleaved as a signal peptide. The tract at residues 25–27 (GWL) is HBEAG. The disordered stretch occupies residues 165–214 (NAPILSTLPETTVVRRRDRGRSPRRRTPSPRRRRSPSPRRRRSQSRESQC). Basic residues predominate over residues 178 to 207 (VRRRDRGRSPRRRTPSPRRRRSPSPRRRRS). The stretch at 186-192 (SPRRRTP) is one 1; half-length repeat. The 3 X 8 AA repeats of S-P-R-R-R-R-S-[PQ] stretch occupies residues 186 to 208 (SPRRRTPSPRRRRSPSPRRRRSQ). Positions 186–214 (SPRRRTPSPRRRRSPSPRRRRSQSRESQC) are excised as a propeptide. 2 consecutive repeat copies span residues 193-200 (SPRRRRSP) and 201-208 (SPRRRRSQ).

Belongs to the orthohepadnavirus precore antigen family. In terms of assembly, homodimerizes. Phosphorylated. In terms of processing, cleaved by host furin.

It localises to the secreted. Its subcellular location is the host nucleus. May regulate immune response to the intracellular capsid in acting as a T-cell tolerogen, by having an immunoregulatory effect which prevents destruction of infected cells by cytotoxic T-cells. This immune regulation may predispose to chronicity during perinatal infections and prevent severe liver injury during adult infections. This Hepatitis B virus genotype A2 subtype adw2 (strain Rutter 1979) (HBV-A) protein is External core antigen.